We begin with the raw amino-acid sequence, 498 residues long: L-amino acid oxidase Bs29 (498 aa).

A signal peptide spans 1–3 (SCA). A disulfide bond links C12 and C175. FAD is bound by residues 45–46 (MS), 65–66 (EA), R73, and 89–92 (GPMR). R92 serves as a coordination point for substrate. N-linked (GlcNAc...) asparagine glycosylation is present at N174. H225 is a substrate binding site. V263 is a binding site for FAD. A disulfide bridge links C333 with C414. Y374 contributes to the substrate binding site. FAD is bound by residues E459 and 466 to 471 (GWIDST). 466 to 467 (GW) contacts substrate.

The protein belongs to the flavin monoamine oxidase family. FIG1 subfamily. Monomer. This is in contrast with most of its orthologs, that are non-covalently linked homodimers. FAD serves as cofactor. As to expression, expressed by the venom gland.

It localises to the secreted. The catalysed reaction is an L-alpha-amino acid + O2 + H2O = a 2-oxocarboxylate + H2O2 + NH4(+). It carries out the reaction L-leucine + O2 + H2O = 4-methyl-2-oxopentanoate + H2O2 + NH4(+). In terms of biological role, catalyzes an oxidative deamination of predominantly hydrophobic and aromatic L-amino acids, thus producing hydrogen peroxide that may contribute to the diverse toxic effects of this enzyme. Shows activity on L-Leu. Damage cell membranes of the Gram-positive bacteria S.aureus (MIC=4 ug/ml and MBC=8 ug/ml) and the Gram-negative bacteria A.baumanni (MIC=2 ug/ml and MBC=4 ug/ml). This antibacterial activity is dependent on the production of hydrogen peroxyde, since it is inhibited by catalase, a hydrogen peroxyde scavenger. This is L-amino acid oxidase Bs29 from Bothriechis schlegelii (Eyelash palm pitviper).